Consider the following 390-residue polypeptide: Pyruvate dehydrogenase E1 component subunit alpha-1, mitochondrial (390 aa).

The transit peptide at 1–15 (MAAAILLRRVPPARA) directs the protein to the mitochondrion. Pyruvate is bound by residues histidine 91, tyrosine 117, arginine 118, glycine 166, valine 168, aspartate 197, glycine 198, alanine 199, asparagine 226, and tyrosine 228. Thiamine diphosphate-binding residues include tyrosine 117, arginine 118, glycine 166, valine 168, aspartate 197, glycine 198, alanine 199, and asparagine 226. Aspartate 197 contributes to the Mg(2+) binding site. Residues asparagine 226 and tyrosine 228 each contribute to the Mg(2+) site. Residue histidine 292 coordinates thiamine diphosphate. Residues 293–312 (SMSDPGSTYRTRDEISGVRQ) are disordered. Over residues 302-312 (RTRDEISGVRQ) the composition is skewed to basic and acidic residues.

In terms of assembly, tetramer of 2 alpha and 2 beta subunits. Thiamine diphosphate is required as a cofactor. Requires Mg(2+) as cofactor.

The protein resides in the mitochondrion matrix. The enzyme catalyses N(6)-[(R)-lipoyl]-L-lysyl-[protein] + pyruvate + H(+) = N(6)-[(R)-S(8)-acetyldihydrolipoyl]-L-lysyl-[protein] + CO2. Functionally, the pyruvate dehydrogenase complex catalyzes the overall conversion of pyruvate to acetyl-CoA and CO(2). It contains multiple copies of three enzymatic components: pyruvate dehydrogenase (E1), dihydrolipoamide acetyltransferase (E2) and lipoamide dehydrogenase (E3). The polypeptide is Pyruvate dehydrogenase E1 component subunit alpha-1, mitochondrial (Oryza sativa subsp. japonica (Rice)).